Reading from the N-terminus, the 389-residue chain is Succinate--CoA ligase [ADP-forming] subunit beta (389 aa).

One can recognise an ATP-grasp domain in the interval 9–244; the sequence is KELLRQFNVP…IDEEDAAEIE (236 aa). ATP-binding positions include Lys46, 53–55, Glu99, Ala102, and Glu107; that span reads GRG. Positions 199 and 213 each coordinate Mg(2+). Substrate contacts are provided by residues Asn264 and 321-323; that span reads GIM.

This sequence belongs to the succinate/malate CoA ligase beta subunit family. Heterotetramer of two alpha and two beta subunits. The cofactor is Mg(2+).

It carries out the reaction succinate + ATP + CoA = succinyl-CoA + ADP + phosphate. It catalyses the reaction GTP + succinate + CoA = succinyl-CoA + GDP + phosphate. The protein operates within carbohydrate metabolism; tricarboxylic acid cycle; succinate from succinyl-CoA (ligase route): step 1/1. Functionally, succinyl-CoA synthetase functions in the citric acid cycle (TCA), coupling the hydrolysis of succinyl-CoA to the synthesis of either ATP or GTP and thus represents the only step of substrate-level phosphorylation in the TCA. The beta subunit provides nucleotide specificity of the enzyme and binds the substrate succinate, while the binding sites for coenzyme A and phosphate are found in the alpha subunit. This chain is Succinate--CoA ligase [ADP-forming] subunit beta, found in Polynucleobacter asymbioticus (strain DSM 18221 / CIP 109841 / QLW-P1DMWA-1) (Polynucleobacter necessarius subsp. asymbioticus).